Reading from the N-terminus, the 242-residue chain is MTHSPLIQFNIKKLIDIKMFGFDVSFTNSSIYMLLATTLSLTYLYLAFYNRKLIPSRLQVSAEIVYNLVADMLNQNIGIKGRKFIPLVFSLFIFILFCNLLGMTPYSFTATSHIIVTFTLALLIFLTVTIVGFIKHGVSFLTLFLPHGTPVWLAPLMIVIELFTYLARPVSLSLRLAANMMAGHVLLKVIASFTVSLMIYLKFLPIPLMVILIGFEIFIAILQAYIFTILSCMYLNDAINLH.

A run of 6 helical transmembrane segments spans residues 29-49, 84-104, 114-134, 140-160, 189-209, and 210-230; these read SSIYMLLATTLSLTYLYLAFY, FIPLVFSLFIFILFCNLLGMT, IIVTFTLALLIFLTVTIVGFI, FLTLFLPHGTPVWLAPLMIVI, VIASFTVSLMIYLKFLPIPLM, and VILIGFEIFIAILQAYIFTIL.

The protein belongs to the ATPase A chain family. F-type ATPases have 2 components, CF(1) - the catalytic core - and CF(0) - the membrane proton channel. CF(1) has five subunits: alpha(3), beta(3), gamma(1), delta(1), epsilon(1). CF(0) has three main subunits: a(1), b(2) and c(9-12). The alpha and beta chains form an alternating ring which encloses part of the gamma chain. CF(1) is attached to CF(0) by a central stalk formed by the gamma and epsilon chains, while a peripheral stalk is formed by the delta and b chains.

It is found in the cell inner membrane. In terms of biological role, key component of the proton channel; it plays a direct role in the translocation of protons across the membrane. The sequence is that of ATP synthase subunit a from Rickettsia prowazekii (strain Madrid E).